A 518-amino-acid polypeptide reads, in one-letter code: Gypsy retrotransposon integrase-like protein 1 (518 aa).

The 163-residue stretch at 130 to 292 (QQHLPMVGNP…TPYFQMFNRN (163 aa)) folds into the Integrase catalytic domain. Position 498 is a phosphoserine (Ser498).

The protein is Gypsy retrotransposon integrase-like protein 1 (Gin1) of Mus musculus (Mouse).